A 473-amino-acid polypeptide reads, in one-letter code: Ribulose bisphosphate carboxylase large chain (473 aa).

Asn116 and Thr166 together coordinate substrate. The active-site Proton acceptor is Lys168. Lys170 contributes to the substrate binding site. Positions 194, 196, and 197 each coordinate Mg(2+). Residue Lys194 is modified to N6-carboxylysine. The active-site Proton acceptor is His287. Substrate is bound by residues Arg288, His320, and Ser372.

This sequence belongs to the RuBisCO large chain family. Type I subfamily. In terms of assembly, heterohexadecamer of 8 large chains and 8 small chains. The cofactor is Mg(2+).

The catalysed reaction is 2 (2R)-3-phosphoglycerate + 2 H(+) = D-ribulose 1,5-bisphosphate + CO2 + H2O. The enzyme catalyses D-ribulose 1,5-bisphosphate + O2 = 2-phosphoglycolate + (2R)-3-phosphoglycerate + 2 H(+). Functionally, ruBisCO catalyzes two reactions: the carboxylation of D-ribulose 1,5-bisphosphate, the primary event in carbon dioxide fixation, as well as the oxidative fragmentation of the pentose substrate. Both reactions occur simultaneously and in competition at the same active site. The chain is Ribulose bisphosphate carboxylase large chain from Nitrosomonas europaea (strain ATCC 19718 / CIP 103999 / KCTC 2705 / NBRC 14298).